The sequence spans 155 residues: Small ribosomal subunit protein uS7cz/uS7cy (155 aa).

It belongs to the universal ribosomal protein uS7 family. As to quaternary structure, part of the 30S ribosomal subunit.

Its subcellular location is the plastid. The protein localises to the chloroplast. Functionally, one of the primary rRNA binding proteins, it binds directly to 16S rRNA where it nucleates assembly of the head domain of the 30S subunit. The protein is Small ribosomal subunit protein uS7cz/uS7cy (rps7-A) of Ceratophyllum demersum (Rigid hornwort).